Reading from the N-terminus, the 374-residue chain is Agmatine deiminase (374 aa).

The agmatine site is built by D220 and D226. The active-site Amidino-cysteine intermediate is C366.

The protein belongs to the agmatine deiminase family. In terms of assembly, forms homodimers.

The catalysed reaction is agmatine + H2O = N-carbamoylputrescine + NH4(+). It participates in amine and polyamine biosynthesis; putrescine biosynthesis via agmatine pathway; N-carbamoylputrescine from agmatine: step 1/1. Mediates the hydrolysis of agmatine into N-carbamoylputrescine in the arginine decarboxylase (ADC) pathway of putrescine biosynthesis, a basic polyamine. This Medicago truncatula (Barrel medic) protein is Agmatine deiminase.